The chain runs to 503 residues: AMP phosphorylase (503 aa).

AMP-binding positions include Gly168, 194–199 (SRAITS), and Thr203. The Proton donor role is filled by Asp256. Residues Ser264 and Lys288 each contribute to the AMP site.

This sequence belongs to the thymidine/pyrimidine-nucleoside phosphorylase family. Type 2 subfamily. In terms of assembly, forms an exceptionally large macromolecular structure (&gt;40-mers) in solution.

It carries out the reaction AMP + phosphate = alpha-D-ribose 1,5-bisphosphate + adenine. It catalyses the reaction CMP + phosphate = cytosine + alpha-D-ribose 1,5-bisphosphate. The enzyme catalyses UMP + phosphate = alpha-D-ribose 1,5-bisphosphate + uracil. AMP phosphorolysis is allosterically regulated by the substrate AMP. Functionally, catalyzes the conversion of AMP and phosphate to adenine and ribose 1,5-bisphosphate (R15P). Exhibits phosphorylase activity toward CMP, dCMP and UMP in addition to AMP. Functions in an archaeal AMP degradation pathway, together with R15P isomerase and RubisCO. The sequence is that of AMP phosphorylase from Thermococcus kodakarensis (strain ATCC BAA-918 / JCM 12380 / KOD1) (Pyrococcus kodakaraensis (strain KOD1)).